The following is a 1140-amino-acid chain: Calcium-activated potassium channel slo-1 (1140 aa).

The Extracellular portion of the chain corresponds to 1 to 44; it reads MGEIYSPSQSKGFNQPYGYPMNCNLSRVFMEMTEEDRKCLEERK. A helical membrane pass occupies residues 45–65; sequence YWCFLLSSITTFCASMILVVI. The Cytoplasmic portion of the chain corresponds to 66–139; the sequence is WRVVTHLCCQ…LISGQSLTGR (74 aa). Residues 140–161 traverse the membrane as a helical segment; the sequence is FLVLLVFILSIGSLIIYFYDAS. The Extracellular portion of the chain corresponds to 162–178; sequence FQNFQVETCIPWQDSPS. A helical membrane pass occupies residues 179 to 199; the sequence is QQIDLGFNIFFLVYFFIRFIA. Residues 200 to 203 lie on the Cytoplasmic side of the membrane; that stretch reads ASDK. The chain crosses the membrane as a helical span at residues 204-224; it reads VWFLLEMYSWIDFFTIPPSFV. At 225 to 228 the chain is on the extracellular side; that stretch reads AIYL. A helical; Voltage-sensor membrane pass occupies residues 229-249; the sequence is QRNWLGFRFLRALRLMTVPDI. Residues 250 to 264 are Cytoplasmic-facing; sequence LQYLNILKTSSSIRL. Residues 265–285 form a helical membrane-spanning segment; that stretch reads TQLVTIFVAVCLTGAGLVHLL. Residues 286–299 lie on the Extracellular side of the membrane; it reads ENSGDFFKGFINPH. The segment at residues 300 to 322 is an intramembrane region (pore-forming); the sequence is RITYADSVYFVLVTMSTVGYGDI. Positions 316 to 319 match the Selectivity for potassium motif; that stretch reads TVGY. The Extracellular segment spans residues 323–331; it reads YCTTLCGRL. The chain crosses the membrane as a helical span at residues 332-352; that stretch reads FMIFFILFGLAMFASYVPEIA. At 353–1140 the chain is on the cytoplasmic side; the sequence is DLIGNRQKYG…LEYEPGKRHF (788 aa). The RCK N-terminal 1 domain maps to 371–514; sequence KKHIVVCGHI…DWKRGDDVIC (144 aa). The interval 520–540 is segment S7; sequence LGFIAQSCLAPGFSTMMANLF. Residues 578-598 form a segment S8 region; the sequence is MTFPEAVDLLFNRLGLLLLAI. The tract at residues 797–817 is segment S9; that stretch reads VLNGHVVVCLFADQDSPLIGL. The RCK N-terminal 2 domain occupies 799–953; sequence NGHVVVCLFA…GAKFGTNVPM (155 aa). The Calcium bowl signature appears at 955-977; that stretch reads TELVNDSNVQFLDQDDDDDPDTE. Positions 964, 967, 970, and 972 each coordinate Ca(2+). The segment S10 stretch occupies residues 984–1004; sequence FACGTAFAISVLDSLMSTTYF.

It belongs to the potassium channel family. Calcium-activated (TC 1.A.1.3) subfamily. Slo sub-subfamily. In terms of assembly, homotetramer; which constitutes the calcium-activated potassium channel. Post-translationally, phosphorylated. Expressed in synaptic regions of the nervous system including in both the nerve ring and nerve cords, as well as in the body-wall and vulval muscle. Expressed broadly in motor neurons. Forms puncta at presynaptic terminals of neurons, muscle excitation sites, and in the dorsal nerve cord.

It localises to the cell membrane. It is found in the synapse. Functionally, potassium channel activated by both membrane depolarization or increase in cytosolic Ca(2+) that mediates export of K(+). Its activation dampens the excitatory events that elevate the cytosolic Ca(2+) concentration and/or depolarize the cell membrane. It therefore contributes to repolarization of the membrane potential. Essential for the regulation of neurotransmitter release at synapses. Regulates longevity and age-associated decline in motor activity in mid-late life, by acting in motor neurons and through daf-16 in the intestine. When clustered in neurons, mediates ethanol-induced suppression of locomotory and egg-laying behaviors. The sequence is that of Calcium-activated potassium channel slo-1 from Caenorhabditis elegans.